Reading from the N-terminus, the 710-residue chain is TRP-like ion channel pkd2 (710 aa).

Positions 1 to 23 are cleaved as a signal peptide; that stretch reads MRLWRSPLLLLVVVVELFSWADA. Transmembrane regions (helical) follow at residues 173–193, 197–217, 322–342, 376–396, 404–424, 466–486, 492–512, 525–545, and 555–575; these read WVMC…SPVL, ALWE…IQAL, FFAT…LVAM, FFYR…MWEI, LAFL…YAFV, FFYF…FIGF, KVQG…MVIL, IGVA…CQAF, and IGII…LGIF. A phosphoserine mark is found at serine 599 and serine 632. Positions 689-710 are disordered; that stretch reads RISENNNNAERRRKPLPNNAFR.

It belongs to the transient receptor potential (TRP) ion channel family. In terms of assembly, interacts with rho1.

It is found in the cell membrane. The protein resides in the golgi apparatus membrane. Its function is as follows. Acts as a key signaling component in the regulation of cell shape and cell wall synthesis through interaction with GTPase Rho1. In Schizosaccharomyces pombe (strain 972 / ATCC 24843) (Fission yeast), this protein is TRP-like ion channel pkd2 (pkd2).